The chain runs to 76 residues: Accessory gland-specific peptide 57Dc (76 aa).

The N-terminal stretch at 1 to 20 (MHGTHFLILLLLCGVLGSNG) is a signal peptide.

CAMP-dependent phosphorylation. Lumen fluid of male accessory glands, becomes seminal fluid.

The protein resides in the secreted. Its function is as follows. Transferred from male to female during mating and may affect egglaying and behavior after mating. This is Accessory gland-specific peptide 57Dc (Mst57Dc) from Drosophila melanogaster (Fruit fly).